A 217-amino-acid chain; its full sequence is Adenylate kinase (217 aa).

Position 10–15 (10–15 (GAGKGT)) interacts with ATP. Positions 30 to 59 (STGDMLREAVAKGTELGKKAKEYMDKGELV) are NMP. Residues threonine 31, arginine 36, 57 to 59 (ELV), 85 to 88 (GFPR), and glutamine 92 each bind AMP. The LID stretch occupies residues 126–163 (YRRTCRNCGAVYHLIYAPPKEDNKCDKCGGELYQRDDD). Arginine 127 contributes to the ATP binding site. Residues cysteine 130 and cysteine 133 each coordinate Zn(2+). 136-137 (VY) contacts ATP. Zn(2+) contacts are provided by cysteine 150 and cysteine 153. Positions 160 and 171 each coordinate AMP. Lysine 199 contacts ATP.

Belongs to the adenylate kinase family. In terms of assembly, monomer.

It is found in the cytoplasm. It carries out the reaction AMP + ATP = 2 ADP. The protein operates within purine metabolism; AMP biosynthesis via salvage pathway; AMP from ADP: step 1/1. In terms of biological role, catalyzes the reversible transfer of the terminal phosphate group between ATP and AMP. Plays an important role in cellular energy homeostasis and in adenine nucleotide metabolism. The polypeptide is Adenylate kinase (Archaeoglobus fulgidus (strain ATCC 49558 / DSM 4304 / JCM 9628 / NBRC 100126 / VC-16)).